A 211-amino-acid polypeptide reads, in one-letter code: Thiamine-phosphate synthase (211 aa).

4-amino-2-methyl-5-(diphosphooxymethyl)pyrimidine contacts are provided by residues 37 to 41 and N69; that span reads QLRIK. Mg(2+) is bound by residues D70 and D89. Residue S108 coordinates 4-amino-2-methyl-5-(diphosphooxymethyl)pyrimidine. Position 134 to 136 (134 to 136) interacts with 2-[(2R,5Z)-2-carboxy-4-methylthiazol-5(2H)-ylidene]ethyl phosphate; sequence TQT. Position 137 (K137) interacts with 4-amino-2-methyl-5-(diphosphooxymethyl)pyrimidine. Residues G166 and 186–187 contribute to the 2-[(2R,5Z)-2-carboxy-4-methylthiazol-5(2H)-ylidene]ethyl phosphate site; that span reads VS.

This sequence belongs to the thiamine-phosphate synthase family. The cofactor is Mg(2+).

The catalysed reaction is 2-[(2R,5Z)-2-carboxy-4-methylthiazol-5(2H)-ylidene]ethyl phosphate + 4-amino-2-methyl-5-(diphosphooxymethyl)pyrimidine + 2 H(+) = thiamine phosphate + CO2 + diphosphate. It carries out the reaction 2-(2-carboxy-4-methylthiazol-5-yl)ethyl phosphate + 4-amino-2-methyl-5-(diphosphooxymethyl)pyrimidine + 2 H(+) = thiamine phosphate + CO2 + diphosphate. It catalyses the reaction 4-methyl-5-(2-phosphooxyethyl)-thiazole + 4-amino-2-methyl-5-(diphosphooxymethyl)pyrimidine + H(+) = thiamine phosphate + diphosphate. The protein operates within cofactor biosynthesis; thiamine diphosphate biosynthesis; thiamine phosphate from 4-amino-2-methyl-5-diphosphomethylpyrimidine and 4-methyl-5-(2-phosphoethyl)-thiazole: step 1/1. Functionally, condenses 4-methyl-5-(beta-hydroxyethyl)thiazole monophosphate (THZ-P) and 2-methyl-4-amino-5-hydroxymethyl pyrimidine pyrophosphate (HMP-PP) to form thiamine monophosphate (TMP). This chain is Thiamine-phosphate synthase, found in Salmonella schwarzengrund (strain CVM19633).